Consider the following 407-residue polypeptide: Putative F-box protein At2g16220 (407 aa).

Positions 1 to 45 (MNSHFLTNDLILEVLSRLPLKSVARFHCVSKRWASMFGSPYFKEL) constitute an F-box domain. The disordered stretch occupies residues 385 to 407 (PPSVQPEYDESDSESEEDREIII). The segment covering 391–407 (EYDESDSESEEDREIII) has biased composition (acidic residues).

This is Putative F-box protein At2g16220 from Arabidopsis thaliana (Mouse-ear cress).